Consider the following 207-residue polypeptide: 8-oxoguanine DNA glycosylase/AP lyase (207 aa).

Residues Lys129 and Asp147 contribute to the active site.

Belongs to the type-2 OGG1 family.

It carries out the reaction 2'-deoxyribonucleotide-(2'-deoxyribose 5'-phosphate)-2'-deoxyribonucleotide-DNA = a 3'-end 2'-deoxyribonucleotide-(2,3-dehydro-2,3-deoxyribose 5'-phosphate)-DNA + a 5'-end 5'-phospho-2'-deoxyribonucleoside-DNA + H(+). In terms of biological role, catalyzes the excision of an oxidatively damaged form of guanine (7,8-dihydro-8-oxoguanine = 8-oxoG) from DNA. Also cleaves the DNA backbone at apurinic/apyrimidinic sites (AP sites). This chain is 8-oxoguanine DNA glycosylase/AP lyase, found in Thermotoga maritima (strain ATCC 43589 / DSM 3109 / JCM 10099 / NBRC 100826 / MSB8).